The sequence spans 206 residues: Regulator of rDNA transcription 14 (206 aa).

Residues 178–206 (FVKDHRYPGLTPGLAPVGLSDEEDSSEED) form a disordered region. A phosphoserine mark is found at Ser197, Ser202, and Ser203. Positions 197–206 (SDEEDSSEED) are enriched in acidic residues.

It belongs to the RRT14 family.

The protein localises to the nucleus. It localises to the nucleolus. In terms of biological role, involved in ribosome biogenesis, probably through modulation of rDNA transcription. This Saccharomyces cerevisiae (strain RM11-1a) (Baker's yeast) protein is Regulator of rDNA transcription 14 (RRT14).